The primary structure comprises 201 residues: Small ribosomal subunit protein uS4c (201 aa).

Residues 15–44 (LGALPGLTSKRPKTGNDLKNQSRSGKKSQY) form a disordered region. The 62-residue stretch at 89 to 150 (MRLDNILFRL…EKKSRTLIQN (62 aa)) folds into the S4 RNA-binding domain.

Belongs to the universal ribosomal protein uS4 family. In terms of assembly, part of the 30S ribosomal subunit. Contacts protein S5. The interaction surface between S4 and S5 is involved in control of translational fidelity.

It localises to the plastid. The protein localises to the chloroplast. Its function is as follows. One of the primary rRNA binding proteins, it binds directly to 16S rRNA where it nucleates assembly of the body of the 30S subunit. In terms of biological role, with S5 and S12 plays an important role in translational accuracy. The chain is Small ribosomal subunit protein uS4c (rps4) from Cucumis sativus (Cucumber).